A 221-amino-acid chain; its full sequence is uncharacterized protein (221 aa).

Composition is skewed to low complexity over residues 1–27 (MNNN…NNNN) and 140–162 (TTTS…NSSS). Disordered stretches follow at residues 1–28 (MNNN…NNNE) and 140–205 (TTTS…NIGG).

This is an uncharacterized protein from Dictyostelium discoideum (Social amoeba).